We begin with the raw amino-acid sequence, 63 residues long: Large ribosomal subunit protein uL29 (63 aa).

The protein belongs to the universal ribosomal protein uL29 family.

This is Large ribosomal subunit protein uL29 from Erwinia tasmaniensis (strain DSM 17950 / CFBP 7177 / CIP 109463 / NCPPB 4357 / Et1/99).